The primary structure comprises 127 residues: Protein chibby homolog 1 (127 aa).

The span at 1-10 (MPLFGSTFSP) shows a compositional bias: polar residues. Residues 1 to 26 (MPLFGSTFSPKKTPPRKSASLSNLHN) form a disordered region. 2 positions are modified to phosphoserine: Ser9 and Ser20. Residues 60–112 (IAETGISGGVDRREAQRLRRRNQQLEEENNLLRLKVDILLDMLSETTAESHLM) form a minimal region for the interaction with PKD2 region. Positions 68 to 125 (GVDRREAQRLRRRNQQLEEENNLLRLKVDILLDMLSETTAESHLMEKELDELKSVSRR) form a coiled coil. Residues 77-98 (LRRRNQQLEEENNLLRLKVDIL) form a leucine-zipper; mediates homodimerization region.

Belongs to the chibby family. As to quaternary structure, homodimer. Homodimerization is essential for nuclear localization and interaction with KPNA4 but is dispensable for interaction with CTNNB1. Interacts with polycystin-2/PKD2 and GM130. Interacts with the C-terminal region of CTNNB1. Interacts (C-terminus) with TCIM (C-terminus), TCIM competes with CTNNB1 for the interaction with CBY1. Interacts with FAM92A; this interaction facilitates targeting of FAM92A to cilium basal body. Interacts with CIBAR2. Interacts with KPNA4.

The protein resides in the nucleus speckle. It is found in the cytoplasm. The protein localises to the cytoskeleton. Its subcellular location is the cilium basal body. It localises to the microtubule organizing center. The protein resides in the centrosome. It is found in the centriole. The protein localises to the golgi apparatus. Its subcellular location is the trans-Golgi network. It localises to the cell projection. The protein resides in the cilium. It is found in the flagellum. The protein localises to the nucleus. Inhibits the Wnt/Wingless pathway by binding to CTNNB1/beta-catenin and inhibiting beta-catenin-mediated transcriptional activation through competition with TCF/LEF transcription factors. Has also been shown to play a role in regulating the intracellular trafficking of polycystin-2/PKD2 and possibly of other intracellular proteins. Promotes adipocyte and cardiomyocyte differentiation. The chain is Protein chibby homolog 1 (CBY1) from Bos taurus (Bovine).